A 310-amino-acid polypeptide reads, in one-letter code: Homoserine kinase (310 aa).

Proline 91 to cysteine 101 is an ATP binding site.

Belongs to the GHMP kinase family. Homoserine kinase subfamily.

The protein resides in the cytoplasm. It carries out the reaction L-homoserine + ATP = O-phospho-L-homoserine + ADP + H(+). The protein operates within amino-acid biosynthesis; L-threonine biosynthesis; L-threonine from L-aspartate: step 4/5. Functionally, catalyzes the ATP-dependent phosphorylation of L-homoserine to L-homoserine phosphate. The sequence is that of Homoserine kinase from Escherichia coli (strain SE11).